The following is a 197-amino-acid chain: Nucleoside triphosphate pyrophosphatase (197 aa).

Residue aspartate 74 is the Proton acceptor of the active site.

This sequence belongs to the Maf family. A divalent metal cation serves as cofactor.

Its subcellular location is the cytoplasm. The enzyme catalyses a ribonucleoside 5'-triphosphate + H2O = a ribonucleoside 5'-phosphate + diphosphate + H(+). It catalyses the reaction a 2'-deoxyribonucleoside 5'-triphosphate + H2O = a 2'-deoxyribonucleoside 5'-phosphate + diphosphate + H(+). Its function is as follows. Nucleoside triphosphate pyrophosphatase. May have a dual role in cell division arrest and in preventing the incorporation of modified nucleotides into cellular nucleic acids. The polypeptide is Nucleoside triphosphate pyrophosphatase (Granulibacter bethesdensis (strain ATCC BAA-1260 / CGDNIH1)).